The chain runs to 237 residues: RING finger protein vilya (237 aa).

An RING-type zinc finger spans residues 21-69 (CNSCCALFCDKKHTFFLLACHHVFCERCVKVSAGRTPSDAPIFECSTCR). The segment at 172-237 (MHRMAQAYRS…IHPPNNSFDL (66 aa)) is disordered. The segment covering 180–195 (RSRSLTSQSSSSAQRS) has biased composition (low complexity). The segment covering 221–237 (RQQITSFIHPPNNSFDL) has biased composition (polar residues).

In terms of assembly, may interact with itself and with narya and nenya through their RING-type zinc fingers. As to expression, expressed in nurse cell and pro-oocytes (at protein level).

It localises to the chromosome. Functionally, required for the formation of DNA double-strand breaks during meiosis together with narya and nenya. The chain is RING finger protein vilya from Drosophila melanogaster (Fruit fly).